A 462-amino-acid polypeptide reads, in one-letter code: MAVSLWQQCIGRLQDELSAQQFSMWIRPLQAEMDGDTLVLYAPNRFVLDWVRDKYINIINQFFTEQMGSDAPKLRFDIGSRPSAPKPIQATAAVVKPKLESSPQKSQTSFNVNAPEPAATANHRSNINPTYQFENFVEGKSNQLGKAAALQVAENPGGAYNPLFLYGGTGLGKTHLLHAVGNGIIKNKPNAKVVYMHSERFVQDMVKALQNNAIEEFKRYYRSVDALFIDDIQFFANKDRSQEEFFHTFNALLEGNHQIILTSDRYPKEIDGVEDRLKSRFGWGLTVAIEPPELETRVAILMRKAQESGINLPDEVAFFIAKRLRSNVRELEGALNRVIANANFTGRPITIDFVREALRDLLALQEKLVTIDNIQKTVAEYYKIKMADMLSKRRSRSVARPRQVAMALSKELTNHSLPEIGDAFGGRDHTTVLHACRKIAQLREESHDTKEDYANLIRTLSS.

The domain I, interacts with DnaA modulators stretch occupies residues 1 to 84 (MAVSLWQQCI…RFDIGSRPSA (84 aa)). Residues 84 to 125 (APKPIQATAAVVKPKLESSPQKSQTSFNVNAPEPAATANHRS) form a domain II region. A domain III, AAA+ region region spans residues 126 to 342 (NINPTYQFEN…GALNRVIANA (217 aa)). ATP is bound by residues glycine 170, glycine 172, lysine 173, and threonine 174. Residues 343-462 (NFTGRPITID…YANLIRTLSS (120 aa)) form a domain IV, binds dsDNA region.

It belongs to the DnaA family. In terms of assembly, oligomerizes as a right-handed, spiral filament on DNA at oriC.

Its subcellular location is the cytoplasm. Plays an essential role in the initiation and regulation of chromosomal replication. ATP-DnaA binds to the origin of replication (oriC) to initiate formation of the DNA replication initiation complex once per cell cycle. Binds the DnaA box (a 9 base pair repeat at the origin) and separates the double-stranded (ds)DNA. Forms a right-handed helical filament on oriC DNA; dsDNA binds to the exterior of the filament while single-stranded (ss)DNA is stabiized in the filament's interior. The ATP-DnaA-oriC complex binds and stabilizes one strand of the AT-rich DNA unwinding element (DUE), permitting loading of DNA polymerase. After initiation quickly degrades to an ADP-DnaA complex that is not apt for DNA replication. Binds acidic phospholipids. This is Chromosomal replication initiator protein DnaA from Shewanella woodyi (strain ATCC 51908 / MS32).